A 279-amino-acid polypeptide reads, in one-letter code: Very long chain fatty acid elongase 1 (279 aa).

Met-1 carries the post-translational modification N-acetylmethionine. 7 consecutive transmembrane segments (helical) span residues 23–43 (PLMGSPLLMTSILLTYVYFVL), 61–81 (FMIVYNFSLVALSLYIVYEFL), 110–130 (VAWLFLFSKFIELMDTVIFIL), 137–154 (VTFLHVFHHSVLPWSWWW), 176–196 (VIMYLYYGLSAFGPVAQPYLW), 201–221 (MTAIQLIQFVLVSLHISQYYF), and 231–251 (VIIHLIWMYGTIFFMLFSNFW). The short motif at 275-279 (KVKAN) is the Di-lysine motif element.

The protein belongs to the ELO family. ELOVL1 subfamily. Interacts with LASS2 and HSD17B12. Interacts with TECR. Ubiquitous.

It is found in the endoplasmic reticulum membrane. The catalysed reaction is a very-long-chain acyl-CoA + malonyl-CoA + H(+) = a very-long-chain 3-oxoacyl-CoA + CO2 + CoA. It catalyses the reaction eicosanoyl-CoA + malonyl-CoA + H(+) = 3-oxodocosanoyl-CoA + CO2 + CoA. The enzyme catalyses (11Z)-eicosenoyl-CoA + malonyl-CoA + H(+) = 3-oxo-(13Z)-docosenoyl-CoA + CO2 + CoA. It carries out the reaction docosanoyl-CoA + malonyl-CoA + H(+) = 3-oxotetracosanoyl-CoA + CO2 + CoA. The catalysed reaction is (13Z)-docosenoyl-CoA + malonyl-CoA + H(+) = 3-oxo-(15Z)-tetracosenoyl-CoA + CO2 + CoA. It catalyses the reaction tetracosanoyl-CoA + malonyl-CoA + H(+) = 3-oxohexacosanoyl-CoA + CO2 + CoA. The enzyme catalyses hexacosanoyl-CoA + malonyl-CoA + H(+) = 3-oxooctacosanyol-CoA + CO2 + CoA. It carries out the reaction octadecanoyl-CoA + malonyl-CoA + H(+) = 3-oxoeicosanoyl-CoA + CO2 + CoA. It functions in the pathway lipid metabolism; fatty acid biosynthesis. Functionally, catalyzes the first and rate-limiting reaction of the four reactions that constitute the long-chain fatty acids elongation cycle. This endoplasmic reticulum-bound enzymatic process allows the addition of 2 carbons to the chain of long- and very long-chain fatty acids (VLCFAs) per cycle. Condensing enzyme that exhibits activity toward saturated and monounsaturated acyl-CoA substrates, with the highest activity towards C22:0 acyl-CoA. May participate in the production of both saturated and monounsaturated VLCFAs of different chain lengths that are involved in multiple biological processes as precursors of membrane lipids and lipid mediators. Important for saturated C24:0 and monounsaturated C24:1 sphingolipid synthesis. Indirectly inhibits RPE65 via production of VLCFAs. The sequence is that of Very long chain fatty acid elongase 1 from Homo sapiens (Human).